Consider the following 111-residue polypeptide: Short neuropeptide F (111 aa).

The first 24 residues, 1–24 (MSAMYAKRCAALVLLVVTVGLVNA), serve as a signal peptide directing secretion. Positions 25–76 (TENYMDYGEEMAEKTPAENIHELYRLLLQRNTLDNAGFGGIPLEHLMIRKSQ) are excised as a propeptide. Phe-85 is modified (phenylalanine amide). A propeptide spanning residues 88-111 (SGPHVSARALPRPMGAVAGYDDNN) is cleaved from the precursor.

Expressed throughout the central nervous system (at protein level).

The protein resides in the secreted. Its function is as follows. Plays a role in controlling food intake and regulating body size. The chain is Short neuropeptide F from Camponotus floridanus (Florida carpenter ant).